We begin with the raw amino-acid sequence, 283 residues long: Phosphatidylserine decarboxylase proenzyme (283 aa).

Catalysis depends on charge relay system; for autoendoproteolytic cleavage activity residues D89, H146, and S249. S249 (schiff-base intermediate with substrate; via pyruvic acid; for decarboxylase activity) is an active-site residue. At S249 the chain carries Pyruvic acid (Ser); by autocatalysis.

Belongs to the phosphatidylserine decarboxylase family. PSD-B subfamily. Prokaryotic type I sub-subfamily. In terms of assembly, heterodimer of a large membrane-associated beta subunit and a small pyruvoyl-containing alpha subunit. It depends on pyruvate as a cofactor. In terms of processing, is synthesized initially as an inactive proenzyme. Formation of the active enzyme involves a self-maturation process in which the active site pyruvoyl group is generated from an internal serine residue via an autocatalytic post-translational modification. Two non-identical subunits are generated from the proenzyme in this reaction, and the pyruvate is formed at the N-terminus of the alpha chain, which is derived from the carboxyl end of the proenzyme. The autoendoproteolytic cleavage occurs by a canonical serine protease mechanism, in which the side chain hydroxyl group of the serine supplies its oxygen atom to form the C-terminus of the beta chain, while the remainder of the serine residue undergoes an oxidative deamination to produce ammonia and the pyruvoyl prosthetic group on the alpha chain. During this reaction, the Ser that is part of the protease active site of the proenzyme becomes the pyruvoyl prosthetic group, which constitutes an essential element of the active site of the mature decarboxylase.

Its subcellular location is the cell membrane. It carries out the reaction a 1,2-diacyl-sn-glycero-3-phospho-L-serine + H(+) = a 1,2-diacyl-sn-glycero-3-phosphoethanolamine + CO2. Its pathway is phospholipid metabolism; phosphatidylethanolamine biosynthesis; phosphatidylethanolamine from CDP-diacylglycerol: step 2/2. Its function is as follows. Catalyzes the formation of phosphatidylethanolamine (PtdEtn) from phosphatidylserine (PtdSer). This is Phosphatidylserine decarboxylase proenzyme from Legionella pneumophila (strain Corby).